The sequence spans 143 residues: Large ribosomal subunit protein uL11 (143 aa).

Belongs to the universal ribosomal protein uL11 family. Part of the ribosomal stalk of the 50S ribosomal subunit. Interacts with L10 and the large rRNA to form the base of the stalk. L10 forms an elongated spine to which L12 dimers bind in a sequential fashion forming a multimeric L10(L12)X complex. In terms of processing, one or more lysine residues are methylated.

Forms part of the ribosomal stalk which helps the ribosome interact with GTP-bound translation factors. The protein is Large ribosomal subunit protein uL11 of Treponema denticola (strain ATCC 35405 / DSM 14222 / CIP 103919 / JCM 8153 / KCTC 15104).